A 267-amino-acid chain; its full sequence is Translation initiation factor 2 subunit alpha (267 aa).

The S1 motif domain maps to 17-88 (GEIVIGTVKR…KRGHIDLSIK (72 aa)).

Belongs to the eIF-2-alpha family. Heterotrimer composed of an alpha, a beta and a gamma chain.

In terms of biological role, eIF-2 functions in the early steps of protein synthesis by forming a ternary complex with GTP and initiator tRNA. This Archaeoglobus fulgidus (strain ATCC 49558 / DSM 4304 / JCM 9628 / NBRC 100126 / VC-16) protein is Translation initiation factor 2 subunit alpha (eif2a).